The chain runs to 28 residues: uncharacterized protein (28 aa).

This is an uncharacterized protein from Archaeoglobus fulgidus (strain ATCC 49558 / DSM 4304 / JCM 9628 / NBRC 100126 / VC-16).